Reading from the N-terminus, the 565-residue chain is Phosphoenolpyruvate-protein phosphotransferase (565 aa).

H191 functions as the Tele-phosphohistidine intermediate in the catalytic mechanism. Residues R289 and R325 each contribute to the phosphoenolpyruvate site. The Mg(2+) site is built by E427 and D451. Residues 450–451 and R461 each bind phosphoenolpyruvate; that span reads ND. The active-site Proton donor is the C498.

It belongs to the PEP-utilizing enzyme family. In terms of assembly, homodimer. Requires Mg(2+) as cofactor.

It is found in the cytoplasm. It catalyses the reaction L-histidyl-[protein] + phosphoenolpyruvate = N(pros)-phospho-L-histidyl-[protein] + pyruvate. Functionally, general (non sugar-specific) component of the phosphoenolpyruvate-dependent sugar phosphotransferase system (sugar PTS). This major carbohydrate active-transport system catalyzes the phosphorylation of incoming sugar substrates concomitantly with their translocation across the cell membrane. Enzyme I transfers the phosphoryl group from phosphoenolpyruvate (PEP) to the phosphoryl carrier protein (HPr). The sequence is that of Phosphoenolpyruvate-protein phosphotransferase (ptsI) from Haloferax volcanii (strain ATCC 29605 / DSM 3757 / JCM 8879 / NBRC 14742 / NCIMB 2012 / VKM B-1768 / DS2) (Halobacterium volcanii).